Reading from the N-terminus, the 93-residue chain is Protein F-93 (93 aa).

As to quaternary structure, homodimer.

Probable transcription factor that recognizes a (pseudo-)palindromic DNA target sequence. This chain is Protein F-93, found in Saccharolobus solfataricus (Sulfolobus solfataricus).